We begin with the raw amino-acid sequence, 154 residues long: Transcriptional repressor NrdR (154 aa).

Residues Cys3–Cys34 fold into a zinc finger. One can recognise an ATP-cone domain in the interval Leu46–Asp136.

This sequence belongs to the NrdR family. Requires Zn(2+) as cofactor.

Functionally, negatively regulates transcription of bacterial ribonucleotide reductase nrd genes and operons by binding to NrdR-boxes. The polypeptide is Transcriptional repressor NrdR (Mycobacterium avium (strain 104)).